The sequence spans 338 residues: Holliday junction branch migration complex subunit RuvB (338 aa).

The disordered stretch occupies residues 1–22; sequence MIEADRLIHAEPQGPEERDEQI. Positions 4 to 187 are large ATPase domain (RuvB-L); the sequence is ADRLIHAEPQ…FGIPLRLEFY (184 aa). ATP is bound by residues Arg-27, Gly-68, Lys-71, Thr-72, Thr-73, 134–136, Arg-177, Tyr-187, and Arg-224; that span reads EDY. Residue Thr-72 participates in Mg(2+) binding. The segment at 188-258 is small ATPAse domain (RuvB-S); sequence NTKDLSSIVS…VADLALDMLD (71 aa). The interval 261–338 is head domain (RuvB-H); sequence SEGFDYMDRK…RHFDIIQPEK (78 aa). Residues Arg-297, Arg-316, and Arg-321 each coordinate DNA.

It belongs to the RuvB family. As to quaternary structure, homohexamer. Forms an RuvA(8)-RuvB(12)-Holliday junction (HJ) complex. HJ DNA is sandwiched between 2 RuvA tetramers; dsDNA enters through RuvA and exits via RuvB. An RuvB hexamer assembles on each DNA strand where it exits the tetramer. Each RuvB hexamer is contacted by two RuvA subunits (via domain III) on 2 adjacent RuvB subunits; this complex drives branch migration. In the full resolvosome a probable DNA-RuvA(4)-RuvB(12)-RuvC(2) complex forms which resolves the HJ.

It localises to the cytoplasm. It carries out the reaction ATP + H2O = ADP + phosphate + H(+). The RuvA-RuvB-RuvC complex processes Holliday junction (HJ) DNA during genetic recombination and DNA repair, while the RuvA-RuvB complex plays an important role in the rescue of blocked DNA replication forks via replication fork reversal (RFR). RuvA specifically binds to HJ cruciform DNA, conferring on it an open structure. The RuvB hexamer acts as an ATP-dependent pump, pulling dsDNA into and through the RuvAB complex. RuvB forms 2 homohexamers on either side of HJ DNA bound by 1 or 2 RuvA tetramers; 4 subunits per hexamer contact DNA at a time. Coordinated motions by a converter formed by DNA-disengaged RuvB subunits stimulates ATP hydrolysis and nucleotide exchange. Immobilization of the converter enables RuvB to convert the ATP-contained energy into a lever motion, pulling 2 nucleotides of DNA out of the RuvA tetramer per ATP hydrolyzed, thus driving DNA branch migration. The RuvB motors rotate together with the DNA substrate, which together with the progressing nucleotide cycle form the mechanistic basis for DNA recombination by continuous HJ branch migration. Branch migration allows RuvC to scan DNA until it finds its consensus sequence, where it cleaves and resolves cruciform DNA. This Shewanella sediminis (strain HAW-EB3) protein is Holliday junction branch migration complex subunit RuvB.